The sequence spans 335 residues: Ornithine carbamoyltransferase (335 aa).

Residues 60-63 (STRT), glutamine 87, arginine 111, and 138-141 (HPTQ) each bind carbamoyl phosphate. L-ornithine is bound by residues asparagine 171, aspartate 235, and 239–240 (SM). Carbamoyl phosphate contacts are provided by residues 277–278 (CL) and arginine 322.

Belongs to the aspartate/ornithine carbamoyltransferase superfamily. OTCase family.

The protein localises to the cytoplasm. It carries out the reaction carbamoyl phosphate + L-ornithine = L-citrulline + phosphate + H(+). It participates in amino-acid biosynthesis; L-arginine biosynthesis; L-arginine from L-ornithine and carbamoyl phosphate: step 1/3. Its function is as follows. Reversibly catalyzes the transfer of the carbamoyl group from carbamoyl phosphate (CP) to the N(epsilon) atom of ornithine (ORN) to produce L-citrulline. The sequence is that of Ornithine carbamoyltransferase from Streptomyces avermitilis (strain ATCC 31267 / DSM 46492 / JCM 5070 / NBRC 14893 / NCIMB 12804 / NRRL 8165 / MA-4680).